The following is a 288-amino-acid chain: MDKIIKSISKNGHFRAFALDSTLTVKEAQERHQTWPTSTVALGRTLIAGQILGANEKGDTKITVKVLGDGAMGPIIAVADSRGHVKGYVKNRKLDYKKASTGEVLVAPFVGNGFLVVVKDMGLKQPYSGQVDLITGEIGEDLAWYFLSSEQTPSSVGVNVLLNEDSDTVKIAGGFMLQALPDATDEEITEIEHNIKSMPSIATMLTSEEPLKTMLDNIYGDMEYKNLGEFPLEFKCDCSKERFLEGIKSLGREPIEEMIAEDHGAEIICQFCENKYEYSEDELKALLK.

Intrachain disulfides connect Cys-236–Cys-238 and Cys-269–Cys-272.

This sequence belongs to the HSP33 family. In terms of processing, under oxidizing conditions two disulfide bonds are formed involving the reactive cysteines. Under reducing conditions zinc is bound to the reactive cysteines and the protein is inactive.

It is found in the cytoplasm. In terms of biological role, redox regulated molecular chaperone. Protects both thermally unfolding and oxidatively damaged proteins from irreversible aggregation. Plays an important role in the bacterial defense system toward oxidative stress. This Lactococcus lactis subsp. lactis (strain IL1403) (Streptococcus lactis) protein is 33 kDa chaperonin.